A 456-amino-acid polypeptide reads, in one-letter code: Bifunctional protein GlmU (456 aa).

The interval 1–229 (MLNSAMSVVI…ISETDGVNNR (229 aa)) is pyrophosphorylase. Residues 11 to 14 (LAAG), K25, Q76, 81 to 82 (GT), 103 to 105 (YGD), G140, E154, N169, and N227 each bind UDP-N-acetyl-alpha-D-glucosamine. D105 is a Mg(2+) binding site. Residue N227 participates in Mg(2+) binding. The linker stretch occupies residues 230–250 (LQLSRLERIYQAEQAEKLLLS). The segment at 251 to 456 (GVMLRDPARF…QGWQRPVKKK (206 aa)) is N-acetyltransferase. UDP-N-acetyl-alpha-D-glucosamine contacts are provided by R333 and K351. Catalysis depends on H363, which acts as the Proton acceptor. UDP-N-acetyl-alpha-D-glucosamine contacts are provided by Y366 and N377. Acetyl-CoA contacts are provided by residues A380, 386–387 (NY), S405, A423, and R440.

It in the N-terminal section; belongs to the N-acetylglucosamine-1-phosphate uridyltransferase family. This sequence in the C-terminal section; belongs to the transferase hexapeptide repeat family. As to quaternary structure, homotrimer. Mg(2+) serves as cofactor.

The protein localises to the cytoplasm. The catalysed reaction is alpha-D-glucosamine 1-phosphate + acetyl-CoA = N-acetyl-alpha-D-glucosamine 1-phosphate + CoA + H(+). The enzyme catalyses N-acetyl-alpha-D-glucosamine 1-phosphate + UTP + H(+) = UDP-N-acetyl-alpha-D-glucosamine + diphosphate. It functions in the pathway nucleotide-sugar biosynthesis; UDP-N-acetyl-alpha-D-glucosamine biosynthesis; N-acetyl-alpha-D-glucosamine 1-phosphate from alpha-D-glucosamine 6-phosphate (route II): step 2/2. Its pathway is nucleotide-sugar biosynthesis; UDP-N-acetyl-alpha-D-glucosamine biosynthesis; UDP-N-acetyl-alpha-D-glucosamine from N-acetyl-alpha-D-glucosamine 1-phosphate: step 1/1. The protein operates within bacterial outer membrane biogenesis; LPS lipid A biosynthesis. Functionally, catalyzes the last two sequential reactions in the de novo biosynthetic pathway for UDP-N-acetylglucosamine (UDP-GlcNAc). The C-terminal domain catalyzes the transfer of acetyl group from acetyl coenzyme A to glucosamine-1-phosphate (GlcN-1-P) to produce N-acetylglucosamine-1-phosphate (GlcNAc-1-P), which is converted into UDP-GlcNAc by the transfer of uridine 5-monophosphate (from uridine 5-triphosphate), a reaction catalyzed by the N-terminal domain. The chain is Bifunctional protein GlmU from Salmonella agona (strain SL483).